The sequence spans 425 residues: MASAFSSTVGAPASTPTIFLGKKVKNYYHGGNKMKSRVVRVMAAKKELDQGKQTDADRWKGLAYDISDDQQDITRGKGIVDSLFQAPMGDGTHEAILSSYEYISQGLRKYDFDNTMDGLYIAPAFMDKLIVHLAKNFMTLPNIKVPLILGIWGGKGQGKSFQCELVFAKMGINPIMMSAGELESGNGEPAKLIRQRYREAADIINKGKMCCLFINDLDAGAGRMGGTTQYTVNNQMVNATLMNIADAPTNVQLPGMYNKEENPRVPIIVTGNDFSTLYAPLIRDGRMEKFYWAPTREDRIGVCKGIFRTDNVPDEAVVRLVDTFPGQSIDFFGALRARVYDDEVRKWVGEIGVENISKRLVNSREGPPTFDQPKMTIEKLMEYGHMLVQEQENVKRVQLADKYLSEAALGQANDDAMKTGAFYGK.

The N-terminal 43 residues, 1–43 (MASAFSSTVGAPASTPTIFLGKKVKNYYHGGNKMKSRVVRVMA), are a transit peptide targeting the chloroplast. 153–160 (GGKGQGKS) is an ATP binding site.

It belongs to the RuBisCO activase family.

It localises to the plastid. The protein resides in the chloroplast stroma. Activation of RuBisCO (ribulose-1,5-bisphosphate carboxylase/oxygenase; EC 4.1.1.39) involves the ATP-dependent carboxylation of the epsilon-amino group of lysine leading to a carbamate structure. This chain is Ribulose bisphosphate carboxylase/oxygenase activase B, chloroplastic (RCAB), found in Hordeum vulgare (Barley).